A 261-amino-acid polypeptide reads, in one-letter code: Proteasome assembly chaperone 2 (261 aa).

It belongs to the PSMG2 family. Forms a heterodimer with psmg1. Degraded by the proteasome upon completion of 20S proteasome maturation.

It localises to the nucleus. Functionally, chaperone protein which promotes assembly of the 20S proteasome as part of a heterodimer with psmg1. This chain is Proteasome assembly chaperone 2, found in Xenopus tropicalis (Western clawed frog).